The sequence spans 100 residues: Large ribosomal subunit protein eL30 (100 aa).

The protein belongs to the eukaryotic ribosomal protein eL30 family.

This chain is Large ribosomal subunit protein eL30 (rpl30e), found in Aeropyrum pernix (strain ATCC 700893 / DSM 11879 / JCM 9820 / NBRC 100138 / K1).